A 346-amino-acid polypeptide reads, in one-letter code: Selenide, water dikinase (346 aa).

Sec16 is an active-site residue. Position 16 (Sec16) is a non-standard amino acid, selenocysteine. ATP is bound by residues Lys19 and 47–49; that span reads TAD. Position 50 (Asp50) interacts with Mg(2+). Residues Asp67, Asp90, and 138-140 contribute to the ATP site; that span reads GHS. Asp90 lines the Mg(2+) pocket. Residue Asp226 coordinates Mg(2+).

This sequence belongs to the selenophosphate synthase 1 family. Class I subfamily. In terms of assembly, homodimer. The cofactor is Mg(2+).

The enzyme catalyses hydrogenselenide + ATP + H2O = selenophosphate + AMP + phosphate + 2 H(+). In terms of biological role, synthesizes selenophosphate from selenide and ATP. This Haemophilus influenzae (strain ATCC 51907 / DSM 11121 / KW20 / Rd) protein is Selenide, water dikinase.